A 553-amino-acid polypeptide reads, in one-letter code: MDDIVNSVPSWMFTAIIAVCILFIIGIIFARLYRRASAEQAFVRTGLGGQKVVMSGGAIVMPIFHEIIPINMNTLKLEVSRSTIDSLITKDRMRVDVVVAFFVRVKPSVEGIATAAQTLGQRTLSPEDLRMLVEDKFVDALRATAAQMTMHELQDTRENFVQGVQNTVAEDLSKNGLELESVSLTNFNQTSKEHFNPNNAFDAEGLTKLTQETERRRRERNEVEQDVEVAVREKNRDALSRKLEIEQQEAFMTLEQEQQVKTRTAEQNARIAAFEAERRREAEQTRILAERQIQETEIDREQAVRSRKVEAEREVRIKEIEQQQVTEIANQTKSIAIAAKSEQQSQAEARANLALAEAVSAQQNVETTRQTAEADRAKQVALIAAAQDAETKAVELTVRAKAEKEAAEMQAAAIVELAEATRKKGLAEAEAQRALNDAINVLSDEQTSLKFKLALLQALPAVIEKSVEPMKSIDGIKIIQVDGLNRGGAAGDANTGNVGGGNLAEQALSAALSYRTQAPLIDSLLNEIGVSGGSLAALTSPLTSTTPVEEKAE.

Over 1–9 (MDDIVNSVP) the chain is Periplasmic. Residues 10-30 (SWMFTAIIAVCILFIIGIIFA) form a helical membrane-spanning segment. Topologically, residues 31–553 (RLYRRASAEQ…STTPVEEKAE (523 aa)) are cytoplasmic.

The protein belongs to the band 7/mec-2 family. Flotillin subfamily. Homooligomerizes.

It is found in the cell inner membrane. Its subcellular location is the membrane raft. In terms of biological role, found in membrane microdomains that may be equivalent to eukaryotic membrane rafts. FMMs are highly dynamic and increase in number as cells age. Flotillins are thought to be important factors in membrane fluidity. This chain is Flotillin family inner membrane protein YqiK (yqiK), found in Escherichia coli (strain K12).